The primary structure comprises 187 residues: CASP-like protein 2 (187 aa).

Over 1 to 24 (MKVSAVETGEISQVSAPRKGMIRG) the chain is Cytoplasmic. Residues 25–45 (LSIMDFILRIVAAIGTLGSAL) form a helical membrane-spanning segment. The Extracellular segment spans residues 46 to 72 (STGTTRETLPFTTQFVKFRAVFDDLPT). Residues 73-93 (FVFFVTSNSIVCGYLVLSLAL) traverse the membrane as a helical segment. At 94–108 (SFFHIIRRSSAAKSR) the chain is on the cytoplasmic side. A helical membrane pass occupies residues 109-129 (ILLVFLDTVMFGLLTTGAAAA). Residues 130 to 163 (GTIVYVSHYGNVNANWFPFCGQYNHFCERISGSL) lie on the Extracellular side of the membrane. A helical membrane pass occupies residues 164–184 (IGSFIAVVIFMIIILMSAVSI). Residues 185 to 187 (SKH) lie on the Cytoplasmic side of the membrane.

It belongs to the Casparian strip membrane proteins (CASP) family. In terms of assembly, homodimer and heterodimers.

Its subcellular location is the cell membrane. The polypeptide is CASP-like protein 2 (Lotus japonicus (Lotus corniculatus var. japonicus)).